The following is a 752-amino-acid chain: Probable GTP-binding protein OBGC1, chloroplastic (752 aa).

The N-terminal 90 residues, 1 to 90 (MAPAVAVVAA…RFPTANPEPR (90 aa)), are a transit peptide targeting the chloroplast. The interval 19–121 (FSAEARRNTK…EEDEVELGLR (103 aa)) is disordered. The span at 26-36 (NTKGSRSKRGS) shows a compositional bias: basic residues. Residues 103-117 (GDDEEDEEEEEDEVE) show a composition bias toward acidic residues. The Obg domain maps to 294–452 (MRCFDTAKIY…MWIDLELKLV (159 aa)). Residues 453–621 (ADVGIVGAPN…VVLAAYKVLQ (169 aa)) form the OBG-type G domain. Residues 459–466 (GAPNAGKS), 484–488 (FTTLL), 506–509 (DLPG), 573–576 (NKMD), and 602–604 (SAM) contribute to the GTP site. Residues Ser466 and Thr486 each contribute to the Mg(2+) site. The OCT domain maps to 649–728 (ERRAPMNEFE…VGEMEMVWTD (80 aa)). The segment at 728 to 752 (DEPSKTRSSKTMNSKDDSVRWPEFG) is disordered. The span at 740–752 (NSKDDSVRWPEFG) shows a compositional bias: basic and acidic residues.

The protein belongs to the TRAFAC class OBG-HflX-like GTPase superfamily. OBG GTPase family. Requires Mg(2+) as cofactor.

The protein resides in the plastid. The protein localises to the chloroplast. Probable GTP-binding protein that may play a role in chloroplast development. In Oryza sativa subsp. indica (Rice), this protein is Probable GTP-binding protein OBGC1, chloroplastic (OBGC1).